A 375-amino-acid polypeptide reads, in one-letter code: Carbamoyl phosphate synthase small chain (375 aa).

The CPSase stretch occupies residues 1 to 184 (MVSLYLENGL…LDYKPFDEKI (184 aa)). Positions 44, 240, and 242 each coordinate L-glutamine. One can recognise a Glutamine amidotransferase type-1 domain in the interval 188–375 (IIAVLDFGAK…KEFVGLLEGF (188 aa)). Cys-268 (nucleophile) is an active-site residue. The L-glutamine site is built by Leu-269, Gln-272, Asn-310, and Tyr-313. Residues His-351 and Glu-353 contribute to the active site.

Belongs to the CarA family. Composed of two chains; the small (or glutamine) chain promotes the hydrolysis of glutamine to ammonia, which is used by the large (or ammonia) chain to synthesize carbamoyl phosphate. Tetramer of heterodimers (alpha,beta)4.

The enzyme catalyses hydrogencarbonate + L-glutamine + 2 ATP + H2O = carbamoyl phosphate + L-glutamate + 2 ADP + phosphate + 2 H(+). It catalyses the reaction L-glutamine + H2O = L-glutamate + NH4(+). Its pathway is amino-acid biosynthesis; L-arginine biosynthesis; carbamoyl phosphate from bicarbonate: step 1/1. It participates in pyrimidine metabolism; UMP biosynthesis via de novo pathway; (S)-dihydroorotate from bicarbonate: step 1/3. Its function is as follows. Small subunit of the glutamine-dependent carbamoyl phosphate synthetase (CPSase). CPSase catalyzes the formation of carbamoyl phosphate from the ammonia moiety of glutamine, carbonate, and phosphate donated by ATP, constituting the first step of 2 biosynthetic pathways, one leading to arginine and/or urea and the other to pyrimidine nucleotides. The small subunit (glutamine amidotransferase) binds and cleaves glutamine to supply the large subunit with the substrate ammonia. This chain is Carbamoyl phosphate synthase small chain, found in Helicobacter pylori (strain J99 / ATCC 700824) (Campylobacter pylori J99).